Consider the following 223-residue polypeptide: Phosphoribosylformylglycinamidine synthase subunit PurQ (223 aa).

One can recognise a Glutamine amidotransferase type-1 domain in the interval 3–223 (SAVVQLPGLN…FASALDVVAA (221 aa)). The active-site Nucleophile is cysteine 86. Active-site residues include histidine 196 and glutamate 198.

As to quaternary structure, part of the FGAM synthase complex composed of 1 PurL, 1 PurQ and 2 PurS subunits.

Its subcellular location is the cytoplasm. It carries out the reaction N(2)-formyl-N(1)-(5-phospho-beta-D-ribosyl)glycinamide + L-glutamine + ATP + H2O = 2-formamido-N(1)-(5-O-phospho-beta-D-ribosyl)acetamidine + L-glutamate + ADP + phosphate + H(+). The enzyme catalyses L-glutamine + H2O = L-glutamate + NH4(+). The protein operates within purine metabolism; IMP biosynthesis via de novo pathway; 5-amino-1-(5-phospho-D-ribosyl)imidazole from N(2)-formyl-N(1)-(5-phospho-D-ribosyl)glycinamide: step 1/2. In terms of biological role, part of the phosphoribosylformylglycinamidine synthase complex involved in the purines biosynthetic pathway. Catalyzes the ATP-dependent conversion of formylglycinamide ribonucleotide (FGAR) and glutamine to yield formylglycinamidine ribonucleotide (FGAM) and glutamate. The FGAM synthase complex is composed of three subunits. PurQ produces an ammonia molecule by converting glutamine to glutamate. PurL transfers the ammonia molecule to FGAR to form FGAM in an ATP-dependent manner. PurS interacts with PurQ and PurL and is thought to assist in the transfer of the ammonia molecule from PurQ to PurL. This chain is Phosphoribosylformylglycinamidine synthase subunit PurQ, found in Rhizobium etli (strain ATCC 51251 / DSM 11541 / JCM 21823 / NBRC 15573 / CFN 42).